The sequence spans 505 residues: Glutamate--tRNA ligase (505 aa).

The 'HIGH' region signature appears at 12 to 22; the sequence is PSPTGALHIGG. Residues 260-264 carry the 'KMSKS' region motif; sequence KLSKR. Lys-263 contacts ATP.

It belongs to the class-I aminoacyl-tRNA synthetase family. Glutamate--tRNA ligase type 1 subfamily. In terms of assembly, monomer.

The protein localises to the cytoplasm. It catalyses the reaction tRNA(Glu) + L-glutamate + ATP = L-glutamyl-tRNA(Glu) + AMP + diphosphate. Catalyzes the attachment of glutamate to tRNA(Glu) in a two-step reaction: glutamate is first activated by ATP to form Glu-AMP and then transferred to the acceptor end of tRNA(Glu). This Parabacteroides distasonis (strain ATCC 8503 / DSM 20701 / CIP 104284 / JCM 5825 / NCTC 11152) protein is Glutamate--tRNA ligase.